We begin with the raw amino-acid sequence, 387 residues long: Protein PHYTOCHROME KINASE SUBSTRATE 3 (387 aa).

Disordered regions lie at residues 1-21 (MDAEKKSAHFRQISSYKPQLL), 74-128 (HEKE…CNSQ), and 242-271 (LSTKNNNHNNNGNNSSMSSNTQEEETASVA). The segment covering 12 to 21 (QISSYKPQLL) has biased composition (polar residues). The span at 74–83 (HEKENTHDHP) shows a compositional bias: basic and acidic residues. The segment covering 114-128 (HGTPSVRSESSCNSQ) has biased composition (polar residues). Positions 242–261 (LSTKNNNHNNNGNNSSMSSN) are enriched in low complexity.

The protein belongs to the PKS family.

Probably involved in the phytochrome signaling pathway. The polypeptide is Protein PHYTOCHROME KINASE SUBSTRATE 3 (PKS3) (Arabidopsis thaliana (Mouse-ear cress)).